Reading from the N-terminus, the 425-residue chain is UPF0597 protein Swoo_4889 (425 aa).

It belongs to the UPF0597 family.

This Shewanella woodyi (strain ATCC 51908 / MS32) protein is UPF0597 protein Swoo_4889.